The sequence spans 77 residues: uncharacterized protein (77 aa).

4Fe-4S ferredoxin-type domains lie at 3-32 and 36-65; these read VEIIVDREKCIGCGRCYDVCPKGPLIWTKD and KYYAYDVEYCHNCKFCAGRCPTNAILIKVV. 8 residues coordinate [4Fe-4S] cluster: Cys12, Cys15, Cys18, Cys22, Cys45, Cys48, Cys51, and Cys55.

[4Fe-4S] cluster is required as a cofactor.

Ferredoxins are iron-sulfur proteins that transfer electrons probably in the CO-dehydrogenase complex. This is an uncharacterized protein from Methanocaldococcus jannaschii (strain ATCC 43067 / DSM 2661 / JAL-1 / JCM 10045 / NBRC 100440) (Methanococcus jannaschii).